We begin with the raw amino-acid sequence, 289 residues long: 4-hydroxybenzoate octaprenyltransferase (289 aa).

The next 8 helical transmembrane spans lie at 23–43 (IGALLLLWPTLWALWVATPGV), 46–66 (LWILAVFVAGVWLMRAAGCVV), 99–119 (LFVVLVALSFLLVLTLNTMTI), 141–161 (LPQVVLGAAFGWSIPMAFAAV), 163–183 (ESVPLSCWLMFLANILWAVAY), 213–233 (LIIGILQIAVLALMALIGWLN), 234–254 (GLGWGYYWSVLVAGALFVYQQ), and 268–288 (AFMNNNYVGLVLFLGLAMSYV).

Belongs to the UbiA prenyltransferase family. Mg(2+) is required as a cofactor.

It localises to the cell inner membrane. It carries out the reaction all-trans-octaprenyl diphosphate + 4-hydroxybenzoate = 4-hydroxy-3-(all-trans-octaprenyl)benzoate + diphosphate. It functions in the pathway cofactor biosynthesis; ubiquinone biosynthesis. Functionally, catalyzes the prenylation of para-hydroxybenzoate (PHB) with an all-trans polyprenyl group. Mediates the second step in the final reaction sequence of ubiquinone-8 (UQ-8) biosynthesis, which is the condensation of the polyisoprenoid side chain with PHB, generating the first membrane-bound Q intermediate 3-octaprenyl-4-hydroxybenzoate. In Citrobacter koseri (strain ATCC BAA-895 / CDC 4225-83 / SGSC4696), this protein is 4-hydroxybenzoate octaprenyltransferase.